A 722-amino-acid chain; its full sequence is Polyribonucleotide nucleotidyltransferase (722 aa).

Mg(2+) contacts are provided by Asp487 and Asp493. The KH domain occupies 554–613 (PRMVSFKIHPDKIREVIGKGGATIQALTKETGCSIDIKDDGTVTIASTSAEGMAEAKARI). An S1 motif domain is found at 623–691 (GKIYEGPVVK…ERGRLRLSLK (69 aa)).

Belongs to the polyribonucleotide nucleotidyltransferase family. The cofactor is Mg(2+).

Its subcellular location is the cytoplasm. The enzyme catalyses RNA(n+1) + phosphate = RNA(n) + a ribonucleoside 5'-diphosphate. Its function is as follows. Involved in mRNA degradation. Catalyzes the phosphorolysis of single-stranded polyribonucleotides processively in the 3'- to 5'-direction. This is Polyribonucleotide nucleotidyltransferase from Polynucleobacter asymbioticus (strain DSM 18221 / CIP 109841 / QLW-P1DMWA-1) (Polynucleobacter necessarius subsp. asymbioticus).